Here is a 319-residue protein sequence, read N- to C-terminus: Probable secreted beta-glucosidase C2G2.17c (319 aa).

An N-terminal signal peptide occupies residues 1–19 (MLFNNFLCFAVSAIPLVSA). N-linked (GlcNAc...) asparagine glycosylation is found at Asn36, Asn39, Asn45, Asn48, and Asn221.

Belongs to the SUN family.

Its subcellular location is the secreted. Its function is as follows. Cell surface beta-glucosidase involved in cell wall biogenesis. This Schizosaccharomyces pombe (strain 972 / ATCC 24843) (Fission yeast) protein is Probable secreted beta-glucosidase C2G2.17c.